Here is a 238-residue protein sequence, read N- to C-terminus: Adapter protein MecA (238 aa).

The tract at residues Glu108 to Ala133 is disordered.

The protein belongs to the MecA family. Homodimer.

Enables the recognition and targeting of unfolded and aggregated proteins to the ClpC protease or to other proteins involved in proteolysis. The chain is Adapter protein MecA from Staphylococcus carnosus (strain TM300).